The chain runs to 167 residues: uncharacterized protein (167 aa).

A disordered region spans residues 115-167 (SYRSQPQLGFKSTPPAHSSVFHHSVKAPKEDQAQEAASRPLTSQDGWNPNIKK).

This is an uncharacterized protein from Homo sapiens (Human).